The following is a 117-amino-acid chain: Large ribosomal subunit protein bL17 (117 aa).

This sequence belongs to the bacterial ribosomal protein bL17 family. In terms of assembly, part of the 50S ribosomal subunit. Contacts protein L32.

This Thermomicrobium roseum (strain ATCC 27502 / DSM 5159 / P-2) protein is Large ribosomal subunit protein bL17.